The chain runs to 106 residues: Protein translocase subunit SecE (106 aa).

Helical transmembrane passes span 20-40 (LPIR…LAAI) and 75-95 (IVIG…SIIV).

This sequence belongs to the SecE/SEC61-gamma family. As to quaternary structure, component of the Sec protein translocase complex. Heterotrimer consisting of SecY, SecE and SecG subunits. The heterotrimers can form oligomers, although 1 heterotrimer is thought to be able to translocate proteins. Interacts with the ribosome. Interacts with SecDF, and other proteins may be involved. Interacts with SecA.

The protein resides in the cell inner membrane. Its function is as follows. Essential subunit of the Sec protein translocation channel SecYEG. Clamps together the 2 halves of SecY. May contact the channel plug during translocation. The polypeptide is Protein translocase subunit SecE (Haemophilus influenzae (strain ATCC 51907 / DSM 11121 / KW20 / Rd)).